The primary structure comprises 418 residues: Serine/threonine transporter SstT (418 aa).

A run of 8 helical transmembrane segments spans residues 21–41 (ILIGLVAGIVLALVSTPAAIA), 49–69 (FVGALKAVAPVLVLMLVIASI), 83–103 (ILFLYVLGTFSAALVAVVVSF), 142–162 (ALLNANYIGILAWAVGLGIAL), 190–210 (FAPLGIFGLVASTIAATGFGA), 217–237 (LLVVLIGCMLLVALVVNPLIV), 299–319 (MAGAAITITVLTLAAVHTLGI), and 331–351 (VVAAICACGASGVAGGSLLLI).

This sequence belongs to the dicarboxylate/amino acid:cation symporter (DAACS) (TC 2.A.23) family.

The protein resides in the cell inner membrane. The enzyme catalyses L-serine(in) + Na(+)(in) = L-serine(out) + Na(+)(out). The catalysed reaction is L-threonine(in) + Na(+)(in) = L-threonine(out) + Na(+)(out). Its function is as follows. Involved in the import of serine and threonine into the cell, with the concomitant import of sodium (symport system). The sequence is that of Serine/threonine transporter SstT from Yersinia pestis bv. Antiqua (strain Antiqua).